We begin with the raw amino-acid sequence, 409 residues long: Isovaleryl-CoA dehydrogenase, mitochondrial (409 aa).

The N-terminal 22 residues, 1-22 (MAAAQRWLPGILRRGDGLARRL), are a transit peptide targeting the mitochondrion. FAD-binding positions include 151-160 (LAMSEPNSGS) and 184-186 (WCT). Ser160 serves as a coordination point for substrate. Substrate is bound by residues 206-207 (SK), Tyr261, and 268-271 (DLER). Catalysis depends on Glu270, which acts as the Proton acceptor. FAD-binding positions include Arg296, Gln307, and 364-368 (QCLGG). A substrate-binding site is contributed by 391–392 (AG). 393-395 (TSE) provides a ligand contact to FAD.

It belongs to the acyl-CoA dehydrogenase family. In terms of assembly, homodimer. The cofactor is FAD.

Its subcellular location is the mitochondrion. It catalyses the reaction 3-methylbutanoyl-CoA + oxidized [electron-transfer flavoprotein] + H(+) = 3-methylbut-2-enoyl-CoA + reduced [electron-transfer flavoprotein]. Its pathway is amino-acid degradation; L-leucine degradation; (S)-3-hydroxy-3-methylglutaryl-CoA from 3-isovaleryl-CoA: step 1/3. The protein is Isovaleryl-CoA dehydrogenase, mitochondrial of Oryza sativa subsp. japonica (Rice).